Here is a 442-residue protein sequence, read N- to C-terminus: F-box/FBD/LRR-repeat protein At3g14710 (442 aa).

Positions 26 to 73 (DKFSSLLESVVSIILSQLPTAEAVSTSVLSKSWKNIWTNITDLHFDDT) constitute an F-box domain. 3 LRR repeats span residues 126–147 (NLQRLVVTCNDLEIISFSSLFP), 151–172 (SLVELRLRTKSILDISAPAILP), and 173–194 (NLKFLSLEDARIFNMSSVSKNL). In terms of domain architecture, FBD spans 370-414 (VESPDCVTTMLKVLQIRNFKPNRLQISVLRYVLDNAEILGSVILS).

This is F-box/FBD/LRR-repeat protein At3g14710 from Arabidopsis thaliana (Mouse-ear cress).